The primary structure comprises 402 residues: Nodulation protein E (402 aa).

The 400-residue stretch at 2 to 401 folds into the Ketosynthase family 3 (KS3) domain; the sequence is DRRVVITGIG…GMNAVLAFRQ (400 aa). Residues cysteine 162, histidine 294, and histidine 331 each act as for beta-ketoacyl synthase activity in the active site. A helical transmembrane segment spans residues 329–348; it reads HAHCLGAASALEMIACVMAI.

The protein belongs to the thiolase-like superfamily. Beta-ketoacyl-ACP synthases family.

The protein localises to the cell inner membrane. Proposed to synthesize NOD factor fatty acyl chain. Involved in the synthesis of a highly unsaturated fatty acid moiety, which forms part of a lipo-oligosaccharide that is responsible for host specificity. This is Nodulation protein E (nodE) from Rhizobium sp. (strain N33).